The primary structure comprises 1382 residues: Suppressor of organelle fusion 2 (1382 aa).

Positions 229–463 (RIPLDEATSN…QLFNRPHPIR (235 aa)) constitute a BEACH domain. 2 WD repeats span residues 1094 to 1133 (GHQE…DEIG) and 1140 to 1176 (KHTR…LLAQ).

It belongs to the WD repeat WDR81 family. As to quaternary structure, interacts with sorf-1; the interaction is direct. Interacts with bec-1.

The protein resides in the early endosome. Its subcellular location is the late endosome. The protein localises to the cytoplasm. Together with sorf-1 negatively regulates the levels of phosphatidylinositol 3-phosphate (PtdIns3P) to enable the conversion of early endosomes to late endosomes. Binds to sorf-1 and the sorf-1-sorf-2 complex likely acts through bec-1, a non-catalytic subunit of phosphatidylinositol 3-kinase (PI3K), to suppress PI3K activity, thereby negatively regulating endosomal PtdIns3P levels. This chain is Suppressor of organelle fusion 2, found in Caenorhabditis elegans.